Here is a 172-residue protein sequence, read N- to C-terminus: Exocyst complex component 1-like (172 aa).

The chain is Exocyst complex component 1-like from Mus musculus (Mouse).